We begin with the raw amino-acid sequence, 416 residues long: Maltoporin (416 aa).

The N-terminal stretch at 1-26 (MELTMKKVSVIAAAVAATLAAGSAFA) is a signal peptide.

This sequence belongs to the porin LamB (TC 1.B.3) family. In terms of assembly, homotrimer formed of three 18-stranded antiparallel beta-barrels, containing three independent channels.

Its subcellular location is the cell outer membrane. The catalysed reaction is beta-maltose(in) = beta-maltose(out). Involved in the transport of maltose and maltodextrins. This is Maltoporin from Vibrio cholerae serotype O1 (strain ATCC 39541 / Classical Ogawa 395 / O395).